A 142-amino-acid polypeptide reads, in one-letter code: Baculoviral IAP repeat-containing protein 5 (142 aa).

The stretch at 18 to 88 is one BIR repeat; sequence RISTFKNWPF…KHSSGCAFLS (71 aa). Ser-20 bears the Phosphoserine; by AURKC mark. Lys-23 bears the N6-acetyllysine mark. Thr-34 is subject to Phosphothreonine; by CDK1 and CDK15. Position 48 is a phosphothreonine (Thr-48). Residues Cys-57, Cys-60, His-77, and Cys-84 each coordinate Zn(2+). 4 positions are modified to N6-acetyllysine: Lys-90, Lys-110, Lys-112, and Lys-115. The residue at position 117 (Thr-117) is a Phosphothreonine; by AURKB. Residue Lys-129 is modified to N6-acetyllysine.

This sequence belongs to the IAP family. In terms of assembly, monomer or homodimer. Exists as a homodimer in the apo state and as a monomer in the CPC-bound state. The monomer protects cells against apoptosis more efficiently than the dimer. Only the dimeric form is capable of enhancing tubulin stability in cells. When phosphorylated, interacts with LAMTOR5/HBXIP; the resulting complex binds pro-CASP9, as well as active CASP9, but much less efficiently. Component of the chromosomal passenger complex (CPC) composed of at least BIRC5/survivin, CDCA8/borealin, INCENP, AURKB or AURKC; in the complex forms a triple-helix bundle-based subcomplex with INCENP and CDCA8. Interacts with JTB. Interacts (via BIR domain) with histone H3 phosphorylated at 'Thr-3' (H3pT3). Interacts with EVI5. Interacts with GTP-bound RAN in both the S and M phases of the cell cycle. Interacts with USP9X. Interacts with tubulin. Interacts with BIRC2/c-IAP1. The acetylated form at Lys-129 interacts with STAT3. The monomeric form deacetylated at Lys-129 interacts with XPO1/CRM1. The monomeric form interacts with XIAP/BIRC4. Both the dimeric and monomeric form can interact with DIABLO/SMAC. Interacts with BIRC6/bruce. Interacts with FBXL7; this interaction facilitates the polyubiquitination and subsequent proteasomal degradation of BIRC5 by the SCF(FBXL7) E3 ubiquitin-protein ligase complex. Post-translationally, ubiquitinated by the Cul9-RING ubiquitin-protein ligase complex, leading to its degradation. Ubiquitination is required for centrosomal targeting. Deubiquitinated by USP35 or USP38; leading to stabilization. In terms of processing, acetylation at Lys-129 results in its homodimerization, while deacetylation promotes the formation of monomers which heterodimerize with XPO1/CRM1 which facilitates its nuclear export. The acetylated form represses STAT3 transactivation. The dynamic equilibrium between its acetylation and deacetylation at Lys-129 determines its interaction with XPO1/CRM1, its subsequent subcellular localization, and its ability to inhibit STAT3 transactivation. In vitro phosphorylation at Thr-117 by AURKB prevents interaction with INCENP and localization to mitotic chromosomes. Phosphorylation at Thr-48 by CK2 is critical for its mitotic and anti-apoptotic activities. Phosphorylation at Thr-34 by CDK15 is critical for its anti-apoptotic activity. Phosphorylation at Ser-20 by AURKC is critical for regulation of proper chromosome alignment and segregation, and possibly cytokinesis.

The protein resides in the cytoplasm. Its subcellular location is the nucleus. It is found in the chromosome. It localises to the centromere. The protein localises to the cytoskeleton. The protein resides in the spindle. Its subcellular location is the kinetochore. It is found in the midbody. In terms of biological role, multitasking protein that has dual roles in promoting cell proliferation and preventing apoptosis. Component of a chromosome passage protein complex (CPC) which is essential for chromosome alignment and segregation during mitosis and cytokinesis. Acts as an important regulator of the localization of this complex; directs CPC movement to different locations from the inner centromere during prometaphase to midbody during cytokinesis and participates in the organization of the center spindle by associating with polymerized microtubules. Involved in the recruitment of CPC to centromeres during early mitosis via association with histone H3 phosphorylated at 'Thr-3' (H3pT3) during mitosis. The complex with RAN plays a role in mitotic spindle formation by serving as a physical scaffold to help deliver the RAN effector molecule TPX2 to microtubules. May counteract a default induction of apoptosis in G2/M phase. The acetylated form represses STAT3 transactivation of target gene promoters. May play a role in neoplasia. Inhibitor of CASP3 and CASP7. Essential for the maintenance of mitochondrial integrity and function. The protein is Baculoviral IAP repeat-containing protein 5 (BIRC5) of Pongo abelii (Sumatran orangutan).